Consider the following 342-residue polypeptide: 4-hydroxy-2-oxovalerate aldolase (342 aa).

Residues 7–259 form the Pyruvate carboxyltransferase domain; the sequence is ILVHDMSLRD…CTGVDLGRIQ (253 aa). 15–16 provides a ligand contact to substrate; that stretch reads RD. Residue D16 coordinates Mn(2+). The active-site Proton acceptor is H19. 2 residues coordinate substrate: S169 and H198. H198 and H200 together coordinate Mn(2+). Y289 provides a ligand contact to substrate.

It belongs to the 4-hydroxy-2-oxovalerate aldolase family.

The catalysed reaction is (S)-4-hydroxy-2-oxopentanoate = acetaldehyde + pyruvate. This Alkalilimnicola ehrlichii (strain ATCC BAA-1101 / DSM 17681 / MLHE-1) protein is 4-hydroxy-2-oxovalerate aldolase.